We begin with the raw amino-acid sequence, 630 residues long: Altered inheritance of mitochondria protein 9, mitochondrial (630 aa).

The N-terminal 40 residues, 1-40, are a transit peptide targeting the mitochondrion; it reads MLKLTSRVGPKRLSSGLKSSSFKVNATIISKKFQSSLNSK.

This sequence belongs to the AIM9 family.

The protein localises to the mitochondrion. The protein is Altered inheritance of mitochondria protein 9, mitochondrial (AIM9) of Debaryomyces hansenii (strain ATCC 36239 / CBS 767 / BCRC 21394 / JCM 1990 / NBRC 0083 / IGC 2968) (Yeast).